The sequence spans 462 residues: Threonine--tRNA ligase, mitochondrial (462 aa).

The N-terminal 45 residues, 1 to 45 (MKIQLVRWHCSRNALWNRAFYSTRKATKNASSATPATMTSMVSQR), are a transit peptide targeting the mitochondrion.

This sequence belongs to the class-II aminoacyl-tRNA synthetase family.

The protein resides in the mitochondrion matrix. It carries out the reaction tRNA(Thr) + L-threonine + ATP = L-threonyl-tRNA(Thr) + AMP + diphosphate + H(+). The protein is Threonine--tRNA ligase, mitochondrial (MST1) of Saccharomyces cerevisiae (strain ATCC 204508 / S288c) (Baker's yeast).